The primary structure comprises 355 residues: Methylxanthine N3-demethylase NdmB (355 aa).

A Rieske domain is found at 19-131 (WHPVCTLNEF…CEVKYDIVWV (113 aa)). [2Fe-2S] cluster contacts are provided by cysteine 64, histidine 66, cysteine 87, and histidine 90.

[2Fe-2S] cluster serves as cofactor.

It catalyses the reaction theobromine + NADH + O2 + H(+) = 7-methylxanthine + formaldehyde + NAD(+) + H2O. The catalysed reaction is theobromine + NADPH + O2 + H(+) = 7-methylxanthine + formaldehyde + NADP(+) + H2O. It carries out the reaction 3-methylxanthine + NADH + O2 + H(+) = xanthine + formaldehyde + NAD(+) + H2O. The enzyme catalyses 3-methylxanthine + NADPH + O2 + H(+) = xanthine + formaldehyde + NADP(+) + H2O. Involved in the caffeine degradation, which is the essential first step for assimilating the carbon and nitrogen in caffeine. Catalyzes the N3-demethylation of theobromine to produce 7-methylxanthine and formaldehyde. Also catalyzes the N3-demethylation of 3-methylxanthine, caffeine, and theophylline to xanthine, paraxanthine, and 1-methylxanthine, respectively. NADH is the preferred substrate. In Pseudomonas putida (Arthrobacter siderocapsulatus), this protein is Methylxanthine N3-demethylase NdmB (ndmB).